The chain runs to 186 residues: Elongation factor P (186 aa).

The protein belongs to the elongation factor P family.

It is found in the cytoplasm. Its pathway is protein biosynthesis; polypeptide chain elongation. In terms of biological role, involved in peptide bond synthesis. Stimulates efficient translation and peptide-bond synthesis on native or reconstituted 70S ribosomes in vitro. Probably functions indirectly by altering the affinity of the ribosome for aminoacyl-tRNA, thus increasing their reactivity as acceptors for peptidyl transferase. The chain is Elongation factor P from Prochlorococcus marinus (strain MIT 9215).